The following is a 127-amino-acid chain: Large ribosomal subunit protein uL22 (127 aa).

This sequence belongs to the universal ribosomal protein uL22 family. In terms of assembly, part of the 50S ribosomal subunit.

Its function is as follows. This protein binds specifically to 23S rRNA; its binding is stimulated by other ribosomal proteins, e.g. L4, L17, and L20. It is important during the early stages of 50S assembly. It makes multiple contacts with different domains of the 23S rRNA in the assembled 50S subunit and ribosome. The globular domain of the protein is located near the polypeptide exit tunnel on the outside of the subunit, while an extended beta-hairpin is found that lines the wall of the exit tunnel in the center of the 70S ribosome. In Methylorubrum extorquens (strain CM4 / NCIMB 13688) (Methylobacterium extorquens), this protein is Large ribosomal subunit protein uL22.